The sequence spans 260 residues: Putative [LysW]-aminoadipate/[LysW]-glutamate kinase (260 aa).

Residues 35-36 (GG), arginine 62, and asparagine 162 contribute to the substrate site.

This sequence belongs to the acetylglutamate kinase family. LysZ subfamily.

It is found in the cytoplasm. It catalyses the reaction [amino-group carrier protein]-C-terminal-N-(1,4-dicarboxybutan-1-yl)-L-glutamine + ATP = [amino-group carrier protein]-C-terminal-N-(1-carboxy-5-phosphooxy-5-oxopentan-1-yl)-L-glutamine + ADP. It carries out the reaction [amino-group carrier protein]-C-terminal-gamma-(L-glutamyl)-L-glutamate + ATP = [amino-group carrier protein]-C-terminal-gamma-(5-phospho-L-glutamyl)-L-glutamate + ADP. Its pathway is amino-acid biosynthesis; L-lysine biosynthesis via AAA pathway; L-lysine from L-alpha-aminoadipate (Thermus route): step 2/5. The protein operates within amino-acid biosynthesis; L-arginine biosynthesis. Its function is as follows. Involved in both the arginine and lysine biosynthetic pathways. Phosphorylates the LysW-bound precursors glutamate (for arginine biosynthesis), respectively alpha-aminoadipate (for lysine biosynthesis). The sequence is that of Putative [LysW]-aminoadipate/[LysW]-glutamate kinase from Pyrobaculum neutrophilum (strain DSM 2338 / JCM 9278 / NBRC 100436 / V24Sta) (Thermoproteus neutrophilus).